The following is a 79-amino-acid chain: Defensin-like protein 3 (79 aa).

The signal sequence occupies residues 1–29; it reads MAKFASIITLLFAALVVFAAFEAPTMVEA. 4 cysteine pairs are disulfide-bonded: Cys32–Cys79, Cys43–Cys64, Cys49–Cys73, and Cys53–Cys75.

This sequence belongs to the DEFL family.

Its subcellular location is the secreted. Possesses antifungal activity sensitive to inorganic cations. The chain is Defensin-like protein 3 (AFP3) from Brassica napus (Rape).